A 207-amino-acid polypeptide reads, in one-letter code: MRLFVGLGNPGSKYQDNRHNIGFMVIDEIARRHGFSPWRRRFQGETADGSLDGERITLLKPLTYMNESGRAVQEAVSFYKIGHGEVAVFHDEIELPPAKLRVKVGGGIAGHNGLRSISAHIGNDYLRVRLGVGHPGVKELVHGHVLGDFAKSERPWVAALAEAVADNAGLIAKGREATFANKVHLALQARGFLDDDNKKSGADKAAK.

Y14 is a tRNA binding site. H19 acts as the Proton acceptor in catalysis. Y64, N66, and N112 together coordinate tRNA.

It belongs to the PTH family. In terms of assembly, monomer.

The protein localises to the cytoplasm. It catalyses the reaction an N-acyl-L-alpha-aminoacyl-tRNA + H2O = an N-acyl-L-amino acid + a tRNA + H(+). Hydrolyzes ribosome-free peptidyl-tRNAs (with 1 or more amino acids incorporated), which drop off the ribosome during protein synthesis, or as a result of ribosome stalling. In terms of biological role, catalyzes the release of premature peptidyl moieties from peptidyl-tRNA molecules trapped in stalled 50S ribosomal subunits, and thus maintains levels of free tRNAs and 50S ribosomes. This chain is Peptidyl-tRNA hydrolase, found in Rhodopseudomonas palustris (strain BisB5).